Here is a 192-residue protein sequence, read N- to C-terminus: Peptide deformylase 1 (192 aa).

Residues Cys-101 and His-143 each coordinate Fe cation. The active site involves Glu-144. Residue His-147 coordinates Fe cation.

Belongs to the polypeptide deformylase family. It depends on Fe(2+) as a cofactor.

It carries out the reaction N-terminal N-formyl-L-methionyl-[peptide] + H2O = N-terminal L-methionyl-[peptide] + formate. Removes the formyl group from the N-terminal Met of newly synthesized proteins. Requires at least a dipeptide for an efficient rate of reaction. N-terminal L-methionine is a prerequisite for activity but the enzyme has broad specificity at other positions. This Prochlorococcus marinus (strain MIT 9313) protein is Peptide deformylase 1.